A 165-amino-acid polypeptide reads, in one-letter code: Acireductone dioxygenase (165 aa).

Fe(2+) is bound by residues H90, H92, E96, and H134. Residues H90, H92, E96, and H134 each coordinate Ni(2+).

It belongs to the acireductone dioxygenase (ARD) family. As to quaternary structure, monomer. The cofactor is Fe(2+). Requires Ni(2+) as cofactor.

The catalysed reaction is 1,2-dihydroxy-5-(methylsulfanyl)pent-1-en-3-one + O2 = 3-(methylsulfanyl)propanoate + CO + formate + 2 H(+). It carries out the reaction 1,2-dihydroxy-5-(methylsulfanyl)pent-1-en-3-one + O2 = 4-methylsulfanyl-2-oxobutanoate + formate + 2 H(+). The protein operates within amino-acid biosynthesis; L-methionine biosynthesis via salvage pathway; L-methionine from S-methyl-5-thio-alpha-D-ribose 1-phosphate: step 5/6. Its function is as follows. Catalyzes 2 different reactions between oxygen and the acireductone 1,2-dihydroxy-3-keto-5-methylthiopentene (DHK-MTPene) depending upon the metal bound in the active site. Fe-containing acireductone dioxygenase (Fe-ARD) produces formate and 2-keto-4-methylthiobutyrate (KMTB), the alpha-ketoacid precursor of methionine in the methionine recycle pathway. Ni-containing acireductone dioxygenase (Ni-ARD) produces methylthiopropionate, carbon monoxide and formate, and does not lie on the methionine recycle pathway. The polypeptide is Acireductone dioxygenase (Rhodopseudomonas palustris (strain TIE-1)).